The primary structure comprises 199 residues: Pneumococcal vaccine antigen A homolog (199 aa).

It localises to the cell surface. The chain is Pneumococcal vaccine antigen A homolog (pvaA) from Streptococcus pyogenes serotype M3 (strain ATCC BAA-595 / MGAS315).